The sequence spans 30 residues: Cyclotide vdif-A (30 aa).

The segment at residues 1–30 (GIPCGESCVFIPCISSVVGCSCKSKVCYRN) is a cross-link (cyclopeptide (Gly-Asn)). 3 disulfide bridges follow: C4-C20, C8-C22, and C13-C27.

It belongs to the cyclotide family. Bracelet subfamily. This is a cyclic peptide.

Functionally, probably participates in a plant defense mechanism. This chain is Cyclotide vdif-A, found in Viola diffusa.